A 263-amino-acid chain; its full sequence is MIATSRAVNMNKESKHKKAVAKPCRERQTSVTRAMRPAVARDPRRLSTSSSPSSSPMSAQRRLSREEIINEMEKEQDAIVVRLLREIETLKEENSRLKNQLHHPVPARRSSPFFEGESAILDDDDCNYGYTLDTPKLKLTDGASRHTVLPLTPKDSMTHISHSARRSSRNASISNGTSISDTIFPIETKIHSAPTTNRNLPSADLPHHTLLPRSLSGISSSDLTESGALLHDRRRRSSNYSLDGSNSLKADLMAKRFQTGSLK.

2 disordered regions span residues M1–R62 and L149–G176. Positions L46–R61 are enriched in low complexity. A phosphoserine mark is found at S172, S192, S214, and S238.

It localises to the cytoplasm. Its subcellular location is the nucleus. Its function is as follows. May be a component of a protein phosphatase type 2A (PP2A) complex. Negatively regulates SIT4 phosphatase, a modulators of caffeine sensitivity. In Saccharomyces cerevisiae (strain ATCC 204508 / S288c) (Baker's yeast), this protein is Protein phosphatase type 2A regulatory subunit RTS3 (RTS3).